The following is a 56-amino-acid chain: Small ribosomal subunit protein uS14 (56 aa).

The Zn(2+) site is built by C21, C24, C39, and C42.

This sequence belongs to the universal ribosomal protein uS14 family. As to quaternary structure, component of the 40S small ribosomal subunit. Zn(2+) serves as cofactor.

It is found in the cytoplasm. Its subcellular location is the cytosol. It localises to the rough endoplasmic reticulum. The sequence is that of Small ribosomal subunit protein uS14 (RpS29) from Lysiphlebus testaceipes (Greenbugs aphid parastoid).